Here is a 292-residue protein sequence, read N- to C-terminus: Leucine-rich repeat-containing protein 10B (292 aa).

Residues 1-20 (MGIAESTPDELPSDAEEQLR) are disordered. Over residues 7–16 (TPDELPSDAE) the composition is skewed to acidic residues. 9 LRR repeats span residues 22 to 43 (GDQQ…VCAL), 45 to 66 (RLQK…IEEL), 68 to 90 (ELRI…CRLP), 91 to 112 (RLTR…FAQL), 114 to 136 (SLRC…LRLV), 137 to 158 (ALQS…LPRM), 160 to 181 (GLRG…LLRM), 183 to 204 (RLHI…HPLR), and 205 to 226 (ALRV…ADTV). The segment at 236–261 (RMAERDEPTPRPPPRRPARAFEDEEE) is disordered.

This is Leucine-rich repeat-containing protein 10B (LRRC10B) from Homo sapiens (Human).